The chain runs to 107 residues: Stellacyanin (107 aa).

The Phytocyanin domain occupies 1–105 (TVYTVGDSAG…GQKVHINVTV (105 aa)). N-linked (GlcNAc...) asparagine glycosylation occurs at N28. H46 serves as a coordination point for Cu cation. A disulfide bridge connects residues C59 and C93. A glycan (N-linked (GlcNAc...) asparagine) is linked at N60. Residues C87, H92, and Q97 each coordinate Cu cation. Residue N102 is glycosylated (N-linked (GlcNAc...) asparagine).

The polypeptide is Stellacyanin (Toxicodendron vernicifluum (Japanese lacquer tree)).